The following is a 101-amino-acid chain: uncharacterized protein (101 aa).

Residues 72-94 traverse the membrane as a helical segment; it reads ILCPSFLNYSFINIYCFGPYTMV.

It is found in the membrane. This is an uncharacterized protein from Schizosaccharomyces pombe (strain 972 / ATCC 24843) (Fission yeast).